The following is a 117-amino-acid chain: Protein Wnt-6 (117 aa).

Serine 1 is lipidated: O-palmitoleoyl serine; by PORCN. An intrachain disulfide couples cysteine 83 to cysteine 98. The N-linked (GlcNAc...) asparagine glycan is linked to asparagine 84.

Belongs to the Wnt family. In terms of processing, palmitoleoylation is required for efficient binding to frizzled receptors. Depalmitoleoylation leads to Wnt signaling pathway inhibition.

It is found in the secreted. It localises to the extracellular space. The protein localises to the extracellular matrix. Its function is as follows. Ligand for members of the frizzled family of seven transmembrane receptors. Probable developmental protein. May be a signaling molecule which affects the development of discrete regions of tissues. Is likely to signal over only few cell diameters. This Plethodon jordani (Red-cheeked salamander) protein is Protein Wnt-6 (WNT-6).